A 221-amino-acid polypeptide reads, in one-letter code: Uridylate kinase (221 aa).

7–11 (KISGK) contacts ATP. Glycine 43 is a binding site for UMP. Residues glycine 44 and arginine 48 each contribute to the ATP site. UMP-binding positions include aspartate 62 and 109-115 (LQPGQST). Threonine 135 and tyrosine 141 together coordinate ATP.

The protein belongs to the UMP kinase family. As to quaternary structure, homohexamer.

It is found in the cytoplasm. The enzyme catalyses UMP + ATP = UDP + ADP. Its pathway is pyrimidine metabolism; CTP biosynthesis via de novo pathway; UDP from UMP (UMPK route): step 1/1. Its activity is regulated as follows. Inhibited by UTP. Its function is as follows. Catalyzes the reversible phosphorylation of UMP to UDP. The sequence is that of Uridylate kinase from Ignicoccus hospitalis (strain KIN4/I / DSM 18386 / JCM 14125).